A 490-amino-acid polypeptide reads, in one-letter code: Betaine aldehyde dehydrogenase (490 aa).

The K(+) site is built by Thr26, Ile27, and Asp93. 150–152 (GAW) contacts NAD(+). The Charge relay system role is filled by Lys162. 176–179 (KPSE) provides a ligand contact to NAD(+). Val180 contacts K(+). 230 to 233 (GVAS) contacts NAD(+). Leu246 is a K(+) binding site. The Proton acceptor role is filled by Glu252. NAD(+) is bound by residues Gly254, Cys286, and Glu387. The active-site Nucleophile is Cys286. Cys286 is subject to Cysteine sulfenic acid (-SOH). K(+) contacts are provided by Lys457 and Gly460. Residue Glu464 is the Charge relay system of the active site.

This sequence belongs to the aldehyde dehydrogenase family. In terms of assembly, dimer of dimers. The cofactor is K(+).

It carries out the reaction betaine aldehyde + NAD(+) + H2O = glycine betaine + NADH + 2 H(+). It functions in the pathway amine and polyamine biosynthesis; betaine biosynthesis via choline pathway; betaine from betaine aldehyde: step 1/1. Involved in the biosynthesis of the osmoprotectant glycine betaine. Catalyzes the irreversible oxidation of betaine aldehyde to the corresponding acid. In Escherichia coli O6:H1 (strain CFT073 / ATCC 700928 / UPEC), this protein is Betaine aldehyde dehydrogenase.